The following is a 224-amino-acid chain: GrpE protein homolog 2, mitochondrial (224 aa).

Residues 1–31 (MAARLLWAVRRRMQPLAAHAASEGRGWLHPF) constitute a mitochondrion transit peptide. Lysine 141 carries the post-translational modification N6-acetyllysine.

The protein belongs to the GrpE family. In terms of assembly, probable component of the PAM complex at least composed of a mitochondrial HSP70 protein, GRPEL1 or GRPEL2, TIMM44, TIMM16/PAM16 and TIMM14/DNAJC19.

It localises to the mitochondrion matrix. Essential component of the PAM complex, a complex required for the translocation of transit peptide-containing proteins from the inner membrane into the mitochondrial matrix in an ATP-dependent manner. Seems to control the nucleotide-dependent binding of mitochondrial HSP70 to substrate proteins. Stimulates ATPase activity of mt-HSP70. May also serve to modulate the interconversion of oligomeric (inactive) and monomeric (active) forms of mt-HSP70. The chain is GrpE protein homolog 2, mitochondrial (GRPEL2) from Bos taurus (Bovine).